Consider the following 308-residue polypeptide: UPF0282 protein M164_2122 (308 aa).

Belongs to the UPF0282 family.

The protein is UPF0282 protein M164_2122 of Saccharolobus islandicus (strain M.16.4 / Kamchatka #3) (Sulfolobus islandicus).